The primary structure comprises 469 residues: tRNA-2-methylthio-N(6)-dimethylallyladenosine synthase (469 aa).

In terms of domain architecture, MTTase N-terminal spans R22–E142. [4Fe-4S] cluster contacts are provided by C31, C67, C105, C183, C187, and C190. Positions R169–E401 constitute a Radical SAM core domain. The 63-residue stretch at E404–E466 folds into the TRAM domain.

The protein belongs to the methylthiotransferase family. MiaB subfamily. Monomer. It depends on [4Fe-4S] cluster as a cofactor.

Its subcellular location is the cytoplasm. It carries out the reaction N(6)-dimethylallyladenosine(37) in tRNA + (sulfur carrier)-SH + AH2 + 2 S-adenosyl-L-methionine = 2-methylsulfanyl-N(6)-dimethylallyladenosine(37) in tRNA + (sulfur carrier)-H + 5'-deoxyadenosine + L-methionine + A + S-adenosyl-L-homocysteine + 2 H(+). Its function is as follows. Catalyzes the methylthiolation of N6-(dimethylallyl)adenosine (i(6)A), leading to the formation of 2-methylthio-N6-(dimethylallyl)adenosine (ms(2)i(6)A) at position 37 in tRNAs that read codons beginning with uridine. The polypeptide is tRNA-2-methylthio-N(6)-dimethylallyladenosine synthase (Rhizobium etli (strain ATCC 51251 / DSM 11541 / JCM 21823 / NBRC 15573 / CFN 42)).